The chain runs to 450 residues: tRNA-2-methylthio-N(6)-dimethylallyladenosine synthase (450 aa).

The MTTase N-terminal domain maps to 7 to 127 (KKVFIKTYGC…LPDVLARVRG (121 aa)). 6 residues coordinate [4Fe-4S] cluster: cysteine 16, cysteine 52, cysteine 90, cysteine 168, cysteine 172, and cysteine 175. The 235-residue stretch at 154 to 388 (IKRGVTAFLT…LLLKQQQGFG (235 aa)) folds into the Radical SAM core domain. In terms of domain architecture, TRAM spans 389–450 (SSLVGSTIDT…GYNSLFAELA (62 aa)).

The protein belongs to the methylthiotransferase family. MiaB subfamily. Monomer. [4Fe-4S] cluster serves as cofactor.

It localises to the cytoplasm. The catalysed reaction is N(6)-dimethylallyladenosine(37) in tRNA + (sulfur carrier)-SH + AH2 + 2 S-adenosyl-L-methionine = 2-methylsulfanyl-N(6)-dimethylallyladenosine(37) in tRNA + (sulfur carrier)-H + 5'-deoxyadenosine + L-methionine + A + S-adenosyl-L-homocysteine + 2 H(+). Functionally, catalyzes the methylthiolation of N6-(dimethylallyl)adenosine (i(6)A), leading to the formation of 2-methylthio-N6-(dimethylallyl)adenosine (ms(2)i(6)A) at position 37 in tRNAs that read codons beginning with uridine. In Mesorhizobium japonicum (strain LMG 29417 / CECT 9101 / MAFF 303099) (Mesorhizobium loti (strain MAFF 303099)), this protein is tRNA-2-methylthio-N(6)-dimethylallyladenosine synthase.